The following is a 100-amino-acid chain: Eukaryotic translation initiation factor 4E-binding protein 3 (100 aa).

A YXXXXLphi motif motif is present at residues 40-46 (YDRKFLL). A disordered region spans residues 81-100 (LKEQETEEEIPDDAQFEMDI). The span at 85-100 (ETEEEIPDDAQFEMDI) shows a compositional bias: acidic residues. A TOS motif motif is present at residues 96-100 (FEMDI).

Belongs to the eIF4E-binding protein family. As to quaternary structure, interacts with EIF4E. Interacts with RPA2 (in unphosphorylated form via N-terminus); the interaction enhances EIF4EBP3-mediated inhibition of EIF4E-mediated mRNA nuclear export. Phosphorylated. In terms of tissue distribution, expression is highest in skeletal muscle, heart, kidney, and pancreas, whereas there is very little expression in brain and thymus.

It is found in the cytoplasm. The protein localises to the nucleus. Its function is as follows. Repressor of translation initiation that regulates EIF4E activity by preventing its assembly into the eIF4F complex: the hypophosphorylated form competes with EIF4G1/EIF4G3 and strongly binds to EIF4E, leading to repression of translation. In contrast, the hyperphosphorylated form dissociates from EIF4E, allowing interaction between EIF4G1/EIF4G3 and EIF4E, leading to initiation of translation. Inhibits EIF4E-mediated mRNA nuclear export. The sequence is that of Eukaryotic translation initiation factor 4E-binding protein 3 (EIF4EBP3) from Homo sapiens (Human).